Consider the following 494-residue polypeptide: MTIHVKNNIHWVGQRDWEVQDFHGTEYKMTKGTSYNSYLIREEKTVLIDTVDHRFSQQFIQNLQMEIDLQSIDFIVINHAEEDHSGALSALMEKIPNTPIYCTEAAIDSIVGHHHHPEWNFKTVKTGDSIDIGNGKQLVFVEAPMLHWPDSMMTYLTGDAVLFSNDAFGQHYCDERLFNDEVDQAELMEQCLRYYSNILTPFSALVTAKIQEVLSFNLPVDMIATSHGIVWRENPTQIIEQYLAWANNYQEDRITIFYDSMSNNTRMMADAIAQGIHDVDPSVAVKVFNVSKQDKNEILANVFRSKGILVGSSTMNNVMMPKIAGMLEEITGLRFKAKKAAAFGSYGWNGGAVDRIHARLTDAGFETAISLKTKWRPDGKAMRECREHGQQIAKLWAVKDKSTLSTPVNAFQSATPIEGIEAQQPLTETTPTADAAHSADCQCMVCTVCNWVYDPAKGEPNQGIEVGTTWADVPDYFLCPECHLGKDVFVEYQG.

The interval 30 to 210 (TKGTSYNSYL…PFSALVTAKI (181 aa)) is zinc metallo-hydrolase. Fe cation-binding residues include His79, Glu81, Asp83, His147, Asp166, and His227. In terms of domain architecture, Flavodoxin-like spans 254–393 (ITIFYDSMSN…ECREHGQQIA (140 aa)). Residues 260–264 (SMSNN) and 342–369 (AFGS…ETAI) each bind FMN. The region spanning 441–492 (CQCMVCTVCNWVYDPAKGEPNQGIEVGTTWADVPDYFLCPECHLGKDVFVEY) is the Rubredoxin-like domain. Residues Cys446, Cys449, Cys479, and Cys482 each coordinate Fe cation.

In the N-terminal section; belongs to the zinc metallo-hydrolase group 3 family. Homotetramer. Fe cation serves as cofactor. Requires FMN as cofactor.

The protein resides in the cytoplasm. The protein operates within nitrogen metabolism; nitric oxide reduction. Its function is as follows. Anaerobic nitric oxide reductase; uses NADH to detoxify nitric oxide (NO), protecting several 4Fe-4S NO-sensitive enzymes. Has at least 2 reductase partners, only one of which (NorW, flavorubredoxin reductase) has been identified. NO probably binds to the di-iron center; electrons enter from the NorW at rubredoxin and are transferred sequentially to the FMN center and the di-iron center. Also able to function as an aerobic oxygen reductase. In Vibrio vulnificus (strain YJ016), this protein is Anaerobic nitric oxide reductase flavorubredoxin.